Here is a 300-residue protein sequence, read N- to C-terminus: Tyrosine recombinase XerD (300 aa).

The Core-binding (CB) domain occupies 5–90; it reads YQCDPLIDAF…SLRRFYNYLL (86 aa). The region spanning 111–294 is the Tyr recombinase domain; that stretch reads HLPDSLSESQ…ARARLQELHQ (184 aa). Catalysis depends on residues Arg-151, Lys-175, His-246, Arg-249, and His-272. The active-site O-(3'-phospho-DNA)-tyrosine intermediate is the Tyr-281.

It belongs to the 'phage' integrase family. XerD subfamily. Forms a cyclic heterotetrameric complex composed of two molecules of XerC and two molecules of XerD.

The protein localises to the cytoplasm. Site-specific tyrosine recombinase, which acts by catalyzing the cutting and rejoining of the recombining DNA molecules. The XerC-XerD complex is essential to convert dimers of the bacterial chromosome into monomers to permit their segregation at cell division. It also contributes to the segregational stability of plasmids. This Shewanella oneidensis (strain ATCC 700550 / JCM 31522 / CIP 106686 / LMG 19005 / NCIMB 14063 / MR-1) protein is Tyrosine recombinase XerD.